A 459-amino-acid polypeptide reads, in one-letter code: Argininosuccinate lyase (459 aa).

The protein belongs to the lyase 1 family. Argininosuccinate lyase subfamily.

It is found in the cytoplasm. It carries out the reaction 2-(N(omega)-L-arginino)succinate = fumarate + L-arginine. It participates in amino-acid biosynthesis; L-arginine biosynthesis; L-arginine from L-ornithine and carbamoyl phosphate: step 3/3. In Desulforudis audaxviator (strain MP104C), this protein is Argininosuccinate lyase.